A 344-amino-acid chain; its full sequence is Golgi-associated RAB2 interactor protein 1B (344 aa).

The disordered stretch occupies residues 271-293 (FRSSRKVETNKNSSGKDSSREDS).

This sequence belongs to the GARIN family.

Its subcellular location is the golgi apparatus. Functionally, RAB2B effector protein required for accurate acrosome formation and normal male fertility. In complex with RAB2A/RAB2B, seems to suppress excessive vesicle trafficking during acrosome formation. The sequence is that of Golgi-associated RAB2 interactor protein 1B from Homo sapiens (Human).